Consider the following 202-residue polypeptide: Recombination protein RecR (202 aa).

The C4-type zinc-finger motif lies at 61-76; sequence CARCNSFTEDEVCATC. The Toprim domain maps to 84–179; sequence GLLCIVETPA…KVTRLARGVP (96 aa).

It belongs to the RecR family.

Its function is as follows. May play a role in DNA repair. It seems to be involved in an RecBC-independent recombinational process of DNA repair. It may act with RecF and RecO. This chain is Recombination protein RecR, found in Bordetella pertussis (strain Tohama I / ATCC BAA-589 / NCTC 13251).